The chain runs to 764 residues: Molybdenum cofactor sulfurase 1 (764 aa).

Lys228 carries the N6-(pyridoxal phosphate)lysine modification. Cys394 is a catalytic residue. One can recognise an MOSC domain in the interval 607 to 762 (LRLLKQSDEE…LYCNSVVEGL (156 aa)).

The protein belongs to the class-V pyridoxal-phosphate-dependent aminotransferase family. MOCOS subfamily. The cofactor is pyridoxal 5'-phosphate.

The enzyme catalyses Mo-molybdopterin + L-cysteine + AH2 = thio-Mo-molybdopterin + L-alanine + A + H2O. Sulfurates the molybdenum cofactor. Sulfation of molybdenum is essential for xanthine dehydrogenase (XDH) and aldehyde oxidase (ADO) enzymes in which molybdenum cofactor is liganded by 1 oxygen and 1 sulfur atom in active form. The protein is Molybdenum cofactor sulfurase 1 of Aedes aegypti (Yellowfever mosquito).